The primary structure comprises 287 residues: Agamous-like MADS-box protein AGL53 (287 aa).

One can recognise an MADS-box domain in the interval 30 to 78; sequence STAKKTTNLSMREQTMFKKALELSTLCNIDVCVIYYGRDGKLIKTWPED. The tract at residues 151 to 171 is disordered; the sequence is EFGQTRAVSSTTNPLSPPPSL.

Interacts with MEE14/CBP1.

Its subcellular location is the nucleus. In terms of biological role, probable transcription factor that may function in the maintenance of the proper function of the central cell in pollen tube attraction. This is Agamous-like MADS-box protein AGL53 from Arabidopsis thaliana (Mouse-ear cress).